The sequence spans 79 residues: RNA-binding protein Hfq (79 aa).

In terms of domain architecture, Sm spans 10–70 (DVFLNTVRKQ…ISTIMPGQPV (61 aa)).

It belongs to the Hfq family. Homohexamer.

Functionally, RNA chaperone that binds small regulatory RNA (sRNAs) and mRNAs to facilitate mRNA translational regulation in response to envelope stress, environmental stress and changes in metabolite concentrations. Also binds with high specificity to tRNAs. This Bartonella quintana (strain Toulouse) (Rochalimaea quintana) protein is RNA-binding protein Hfq.